Reading from the N-terminus, the 426-residue chain is Delta-aminolevulinic acid dehydratase, chloroplastic (426 aa).

A chloroplast-targeting transit peptide spans 1-45 (MASTVSFSPANVQMLQGRSCHGHAAFGGCSAVPRTGPRMRSVAVR). Residues 74-107 (GRFPAPPPLVRPKAPEGTPQIRPLDLTKRPRRNR) are disordered. Catalysis depends on Lys293, which acts as the Schiff-base intermediate with substrate. 5-aminolevulinate-binding residues include Arg303 and Lys315. Glu331 contacts Mg(2+). Lys346 functions as the Schiff-base intermediate with substrate in the catalytic mechanism. 5-aminolevulinate-binding residues include Ser372 and Tyr411.

The protein belongs to the ALAD family. In terms of assembly, homooctamer. Mg(2+) is required as a cofactor.

The protein localises to the plastid. Its subcellular location is the chloroplast. It carries out the reaction 2 5-aminolevulinate = porphobilinogen + 2 H2O + H(+). Its pathway is porphyrin-containing compound metabolism; protoporphyrin-IX biosynthesis; coproporphyrinogen-III from 5-aminolevulinate: step 1/4. Functionally, catalyzes an early step in the biosynthesis of tetrapyrroles. Binds two molecules of 5-aminolevulinate per subunit, each at a distinct site, and catalyzes their condensation to form porphobilinogen. The chain is Delta-aminolevulinic acid dehydratase, chloroplastic (HEMB) from Oryza sativa subsp. japonica (Rice).